Consider the following 66-residue polypeptide: Toxin Boma6c (66 aa).

In terms of domain architecture, LCN-type CS-alpha/beta spans Arg2 to His64. 4 disulfide bridges follow: Cys12-Cys63, Cys16-Cys36, Cys22-Cys46, and Cys26-Cys48.

It belongs to the long (4 C-C) scorpion toxin superfamily. Sodium channel inhibitor family. Alpha subfamily. As to expression, expressed by the venom gland.

The protein resides in the secreted. In terms of biological role, alpha toxins bind voltage-independently at site-3 of sodium channels (Nav) and inhibit the inactivation of the activated channels, thereby blocking neuronal transmission. The sequence is that of Toxin Boma6c from Buthus occitanus mardochei (Moroccan scorpion).